Reading from the N-terminus, the 1400-residue chain is MSSHKSTTKSSSSGSSMSLILGFSKSMEKGNYNFSKENKKNRSFGVLYAMIKGNTFPRILTIISLLIEFCQLSSFGFKQQYPWGGDAGYYLKRIMSPVSHPSNLVGYNGFTIFFWIVIGLLLLGFFNIWYVAYQFYRGKIANIWIIRTLRWFVSTTVAVLFIPIISLLLIGLDCDYSQGGILKTFSNDNIYCFKGANLSIAIVSIILIIVFSIVGFTSSATYYEYDTNVKSRFSKPHARFDVYILFVKLILALLNSLVDFSPWTTSIVYFILSITLVFGSIIILPYNNQRLNQVKSGFYTTVFWVSFMTLVTMGINDETTATTCYITIVGAFFAFPIGYFSNRFYYNWLSSKIDQLKLPTSSSTNDFNEITKNEKSKTGDSKEKESSSPSKVTWGKQPITLGSKRQIIFPFFQNKFVMSFFVEIMVRKLLRSSNGSNGDDGISSNSNESIEHANNLYQCGLQYFPNSDLLWMAYCNFLFTVRKDRHIGYAALEKLRRMKPSFDVRFFIYQRDKEREQIMDSDLRGPEHTGKIQDFVSYMEFKKLYYGAKRHHVKCLTYIKKFWGLLLHETVDLHRLSDLSGRIATTENKANESYERLLALNPNSVRVLRDYSQFLEEVVKDTESSYKLQKKAEAIEDIMSKSQTTDFKTIDIKNLDNSDTELDQVLKQESNAIQLAKIDADIERSGSKSGSSKSKDDSSESSSSSKGRRGKYKEFQQSNAINKLSWLMIGTTACCIIFLIVMLIVLRDLSVKHTHSYQGIISITDCASEAVSIAINLNTMQAISISAGSVAFPFEAAEAMITQYRKQNDRSLIIMKNIHDAIYWGEGDPTSYVGDNLSKLKSINGFDVFDIGSTIFSFEEFNRSSTLVDNKEMIDIYSTPSVNMTILVSPPGTNSTNYITVTQTYNAWKAGNSFYESALIANKMSVQDIKDRAVFDPDFKFIILNAPSNIPEMYMKIQQVYIKSLIDDINTTLDTMLYVWVAIFCFLIILGAVLFRPIVTKISREKIRTLVLFSLAPKDVVFKLSSKKIKMTSLDSGSERDNLFDTTDDDAADGIDNHEHLQVDERKKNDDIIDDGSIVNRSINFGSHRRPLMNSTNVLASTTTINRGTISNRLNEDHDKVPLIENSISNNNKGYGWDGKSKRNLNKKSLRSVLRRLHWSYVLAIFLLFGFITMGLWVTYSVVHDNTQSGYVLGKSCSRSLDSRIINYYIAELYTFDNDANENEALEAVLQLQSNHQSLPYLEDVRPLMEGSYGCWMLNKSNCITSDSIYYNDVSIGLDWLVDQYTKHSVSLVNTDPSLLSTSPELGWMQAIGSDVVFQGLDTATFTYFQYYLSQKDWATKVLTSVLAISCVLLLVIHLLLFRPFMNHLRIQHIHTLALLRLAPDDIRFMEVSDKVIDED.

Transmembrane regions (helical) follow at residues I59 to Q79, I112 to A132, F152 to L172, A196 to F216, F240 to F260, S266 to Y286, S296 to N316, and T320 to F340. 2 disordered regions span residues F367–T393 and E683–Y712. Residues E369–S386 show a composition bias toward basic and acidic residues. The next 4 membrane-spanning stretches (helical) occupy residues W726–L746, T975–F995, V1162–V1182, and V1342–F1362.

It is found in the membrane. The sequence is that of Tiny macrocysts protein C (tmcC) from Dictyostelium discoideum (Social amoeba).